Here is a 166-residue protein sequence, read N- to C-terminus: PTS system glucose-specific EIIA component (166 aa).

The PTS EIIA type-1 domain occupies 34–138; the sequence is DPVFAQKMMG…SVISPIIITN (105 aa). Zn(2+)-binding residues include histidine 71 and histidine 86. Histidine 86 serves as the catalytic Tele-phosphohistidine intermediate; for EIIA activity. Phosphohistidine; by HPr is present on histidine 86.

As to quaternary structure, heterodimer with glycerol kinase (glpk). It depends on Zn(2+) as a cofactor.

It localises to the cytoplasm. The phosphoenolpyruvate-dependent sugar phosphotransferase system (sugar PTS), a major carbohydrate active transport system, catalyzes the phosphorylation of incoming sugar substrates concomitantly with their translocation across the cell membrane. The enzyme II complex composed of PtsG and Crr is involved in glucose transport. This is PTS system glucose-specific EIIA component (crr) from Staphylococcus aureus (strain MRSA252).